Here is a 428-residue protein sequence, read N- to C-terminus: Glutamate-1-semialdehyde 2,1-aminomutase (428 aa).

Lys265 carries the N6-(pyridoxal phosphate)lysine modification.

It belongs to the class-III pyridoxal-phosphate-dependent aminotransferase family. HemL subfamily. As to quaternary structure, homodimer. It depends on pyridoxal 5'-phosphate as a cofactor.

The protein localises to the cytoplasm. The enzyme catalyses (S)-4-amino-5-oxopentanoate = 5-aminolevulinate. Its pathway is porphyrin-containing compound metabolism; protoporphyrin-IX biosynthesis; 5-aminolevulinate from L-glutamyl-tRNA(Glu): step 2/2. This chain is Glutamate-1-semialdehyde 2,1-aminomutase, found in Shewanella woodyi (strain ATCC 51908 / MS32).